The following is a 495-amino-acid chain: ATP synthase subunit beta, chloroplastic (495 aa).

Position 172–179 (172–179 (GGAGVGKT)) interacts with ATP.

It belongs to the ATPase alpha/beta chains family. F-type ATPases have 2 components, CF(1) - the catalytic core - and CF(0) - the membrane proton channel. CF(1) has five subunits: alpha(3), beta(3), gamma(1), delta(1), epsilon(1). CF(0) has four main subunits: a(1), b(1), b'(1) and c(9-12).

The protein localises to the plastid. The protein resides in the chloroplast thylakoid membrane. The enzyme catalyses ATP + H2O + 4 H(+)(in) = ADP + phosphate + 5 H(+)(out). Its function is as follows. Produces ATP from ADP in the presence of a proton gradient across the membrane. The catalytic sites are hosted primarily by the beta subunits. This Brimeura amethystina (Spanish hyacinth) protein is ATP synthase subunit beta, chloroplastic.